The following is a 199-amino-acid chain: LexA repressor (199 aa).

The segment at residues 28–47 (IRDIAKHFKLTPRGAHIHVI) is a DNA-binding region (H-T-H motif). Residues Ser120 and Lys157 each act as for autocatalytic cleavage activity in the active site.

Belongs to the peptidase S24 family. Homodimer.

The catalysed reaction is Hydrolysis of Ala-|-Gly bond in repressor LexA.. Functionally, represses a number of genes involved in the response to DNA damage (SOS response), including recA and lexA. In the presence of single-stranded DNA, RecA interacts with LexA causing an autocatalytic cleavage which disrupts the DNA-binding part of LexA, leading to derepression of the SOS regulon and eventually DNA repair. This chain is LexA repressor, found in Thermosipho melanesiensis (strain DSM 12029 / CIP 104789 / BI429).